The primary structure comprises 338 residues: Heme-dependent oxidative N-demethylase alpha subunit (338 aa).

Residues Tyr-38 and His-194 each coordinate heme b. Arg-224 functions as the Proton donor in the catalytic mechanism. Residue Asn-226 coordinates heme b. Glu-266 lines the dimethylamine pocket. Heme b contacts are provided by Tyr-317 and Lys-318.

In terms of assembly, the heme-dependent oxidative N-demethylase (HODM) is a heterotetramer composed of a catalytic alpha subunit, a FMN/2Fe-2S-dependent oxidoreductase beta subunit, a gamma subunit with putative aminotransferase activity, and a delta subunit of unknown function.

It catalyses the reaction dimethylamine + NADPH + O2 + H(+) = methylamine + formaldehyde + NADP(+) + H2O. Component of the heme-dependent oxidative N-demethylase (HODM) enzyme, that catalyzes the NADPH-dependent oxidation of dimethylamine (DMA) to methylamine (MA) and formaldehyde. Functions in bacterial methylated amine catabolism, linking alkylamine oxidation to the tetrahydrofolate C1 pool. The alpha subunit of HODM binds heme, oxygen and DMA, and serves as the site of the oxidative N-demethylase activity. The protein is Heme-dependent oxidative N-demethylase alpha subunit of Ectopseudomonas mendocina (strain ymp) (Pseudomonas mendocina).